Consider the following 297-residue polypeptide: MEPSGSKKGRAEEPREEVECQMSSQPSTSSAKTKATGKKQRKSEKDDGCKPEEKSAQDPETPGHARRKVPVPPFPQHLPPVNLIHRDVLRAWCQEMKLSSKGQKLDAYKRLLARAFPDQMPELKNVPDSAKEARLKMPRKKMKTEPGEESQVTVPLEIVTVPEEQIPALVDPPVLYEEVSTTVVTTSASEAVLASWARIAANAKKLEAVPSNATSETYGSTGEMWCVVHGTSLPATSSGWVRLQFHAGQAWVPDKKGKAIALFLLPACTFPPPHLEDNMLCPKCVHKNKILTKSLEG.

Residues 1 to 77 (MEPSGSKKGR…KVPVPPFPQH (77 aa)) are disordered. Residues 23 to 34 (SSQPSTSSAKTK) are compositionally biased toward low complexity. Positions 43–63 (SEKDDGCKPEEKSAQDPETPG) are enriched in basic and acidic residues. The residue at position 211 (Ser211) is a Phosphoserine.

Interacts with DPPA2. Interacts with PCGF1.

It is found in the nucleus. May be involved in the maintenance of active epigenetic status of target genes. May inhibit differentiation of embryonic stem (ES) cells into a primitive ectoderm lineage. In Rattus norvegicus (Rat), this protein is Developmental pluripotency-associated protein 4 (Dppa4).